The chain runs to 468 residues: Chromosomal replication initiator protein DnaA (468 aa).

The segment at 1-84 is domain I, interacts with DnaA modulators; it reads MSSSLWLQCL…RFEVGSRPVS (84 aa). The interval 80-106 is disordered; that stretch reads SRPVSAPKPAPTRTPADVAAESSAPAQ. A domain II region spans residues 84–131; it reads SAPKPAPTRTPADVAAESSAPAQLQARKPVHKTWDDDPQAIAAINHRS. Residues 132-348 are domain III, AAA+ region; that stretch reads NMNPKHKFDN…GALNRVIANA (217 aa). The ATP site is built by Gly176, Gly178, Lys179, and Thr180. The tract at residues 349-468 is domain IV, binds dsDNA; sequence NFTGRPITID…YSNLIRTLSS (120 aa).

The protein belongs to the DnaA family. Oligomerizes as a right-handed, spiral filament on DNA at oriC.

Its subcellular location is the cytoplasm. In terms of biological role, plays an essential role in the initiation and regulation of chromosomal replication. ATP-DnaA binds to the origin of replication (oriC) to initiate formation of the DNA replication initiation complex once per cell cycle. Binds the DnaA box (a 9 base pair repeat at the origin) and separates the double-stranded (ds)DNA. Forms a right-handed helical filament on oriC DNA; dsDNA binds to the exterior of the filament while single-stranded (ss)DNA is stabiized in the filament's interior. The ATP-DnaA-oriC complex binds and stabilizes one strand of the AT-rich DNA unwinding element (DUE), permitting loading of DNA polymerase. After initiation quickly degrades to an ADP-DnaA complex that is not apt for DNA replication. Binds acidic phospholipids. The protein is Chromosomal replication initiator protein DnaA of Vibrio parahaemolyticus serotype O3:K6 (strain RIMD 2210633).